A 491-amino-acid polypeptide reads, in one-letter code: MIATGGVITGLAALKRQDSARSQQHVNLSPSPATQEKKPIRRRPRADVVVVRGKIRLYSPSGFFLILGVLISIIGIAMAVLGYWPQKEHFIDAETTLSTNETQVIRNEGGVVVRFFEQHLHSDKMKMLGPFTMGIGIFIFICANAILHENRDKETKIIHMRDIYSTVIDIHTLRIKEQRQMNGMYTGLMGETEVKQNGSSCASRLAANTIASFSGFRSSFRMDSSVEEDELMLNEGKSSGHLMPPLLSDSSVSVFGLYPPPSKTTDDKTSGSKKCETKSIVSSSISAFTLPVIKLNNCVIDEPSIDNITEDADNLKSRSRNLSMDSLVVPLPNTSESFQPVSTVLPRNNSIGESLSSQYKSSMALGPGAGQLLSPGAARRQFGSNTSLHLLSSHSKSLDLDRGPSTLTVQAEQRKHPSWPRLDRNNSKGYMKLENKEDPMDRLLVPQVAIKKDFTNKEKLLMISRSHNNLSFEHDEFLSNNLKRGTSETRF.

The Cytoplasmic portion of the chain corresponds to 1-61; sequence MIATGGVITG…RGKIRLYSPS (61 aa). The tract at residues 16–41 is disordered; that stretch reads RQDSARSQQHVNLSPSPATQEKKPIR. Positions 20–34 are enriched in polar residues; the sequence is ARSQQHVNLSPSPAT. Residues 62–82 traverse the membrane as a helical segment; the sequence is GFFLILGVLISIIGIAMAVLG. Residues 83-126 are Extracellular-facing; sequence YWPQKEHFIDAETTLSTNETQVIRNEGGVVVRFFEQHLHSDKMK. Residue asparagine 100 is glycosylated (N-linked (GlcNAc...) asparagine). Residues 127-147 traverse the membrane as a helical segment; sequence MLGPFTMGIGIFIFICANAIL. Residues 148–491 lie on the Cytoplasmic side of the membrane; sequence HENRDKETKI…LKRGTSETRF (344 aa). Serine 350 carries the post-translational modification Phosphoserine.

Belongs to the TMEM200 family. In terms of tissue distribution, expressed in cerebellum.

The protein localises to the membrane. This is Transmembrane protein 200A (TMEM200A) from Homo sapiens (Human).